We begin with the raw amino-acid sequence, 547 residues long: Sesquiterpene synthase TPS3 (547 aa).

5 residues coordinate (2E,6E)-farnesyl diphosphate: R265, D302, D306, R443, and D446. Residues D302 and D306 each coordinate Mg(2+). Residues 302–306 (DDIYD) carry the DDXXD motif motif. Positions 446, 450, and 454 each coordinate Mg(2+).

Belongs to the terpene synthase family. Tpsb subfamily. As to quaternary structure, monomer. It depends on Mg(2+) as a cofactor.

The protein localises to the cytoplasm. The catalysed reaction is (2E,6E)-farnesyl diphosphate = (1S,5S,6R)-alpha-bergamotene + diphosphate. Its pathway is secondary metabolite biosynthesis; terpenoid biosynthesis. Its function is as follows. Sesquiterpene synthase involved in the biosynthesis of volatile organic compounds. Mediates the conversion of (2E,6E)-farnesyl diphosphate (FPP) into alpha-bergamotene. Does not use (2E)-geranyl diphosphate (GPP) as substrate. The sequence is that of Sesquiterpene synthase TPS3 from Cananga odorata (Ylang-ylang tree).